The primary structure comprises 531 residues: Zinc finger protein 692 (531 aa).

Residues 155 to 178 (EAQGLECEQRERTQETRLSRRVDS) show a composition bias toward basic and acidic residues. Disordered regions lie at residues 155 to 249 (EAQG…PATL) and 287 to 307 (MTES…PTWD). Residues 186–206 (LGEDQDVEEEEEEEEEEEELL) are compositionally biased toward acidic residues. At Ser-231 the chain carries Phosphoserine. Residues 290–303 (SLESPGSQAQSAPN) are compositionally biased toward polar residues. 5 consecutive C2H2-type zinc fingers follow at residues 327–352 (MPCD…KYQH), 358–382 (FCCP…VKLH), 388–410 (YICE…RRIH), 416–438 (LQCE…RRKH), and 447–470 (FPCE…SKSH). Phosphoserine is present on Ser-469. The disordered stretch occupies residues 474-531 (LPAQEPPGSLVSSPSISAPESLQSPEGASISTTSDSNPASSTSISSPGVPDPRNREKS). Positions 483–499 (LVSSPSISAPESLQSPE) are enriched in polar residues. The span at 502–520 (SISTTSDSNPASSTSISSP) shows a compositional bias: low complexity.

It belongs to the krueppel C2H2-type zinc-finger protein family. In terms of processing, phosphorylation at Ser-469 results in loss of DNA-binding activity.

Its subcellular location is the nucleus. May act as an transcriptional repressor for PCK1 gene expression, in turn may participate in the hepatic gluconeogenesis regulation through the activated AMPK signaling pathway. This is Zinc finger protein 692 from Mus musculus (Mouse).